We begin with the raw amino-acid sequence, 980 residues long: Valine--tRNA ligase (980 aa).

The tract at residues 1–40 (MADKGCEAAQSKDSSAPGSGEPRPKTEKELERERQKAAKL) is disordered. Residues 22-40 (PRPKTEKELERERQKAAKL) show a composition bias toward basic and acidic residues. The 'HIGH' region signature appears at 139 to 149 (PNVTGALHIGH). The 'KMSKS' region motif lies at 652–656 (KMSKS). K655 is an ATP binding site.

The protein belongs to the class-I aminoacyl-tRNA synthetase family.

The protein localises to the cytoplasm. The catalysed reaction is tRNA(Val) + L-valine + ATP = L-valyl-tRNA(Val) + AMP + diphosphate. The chain is Valine--tRNA ligase (vas2) from Schizosaccharomyces pombe (strain 972 / ATCC 24843) (Fission yeast).